We begin with the raw amino-acid sequence, 236 residues long: 7-cyano-7-deazaguanine synthase (236 aa).

An ATP-binding site is contributed by Cys-7–Ala-17. Residues Cys-185, Cys-193, Cys-196, and Cys-199 each coordinate Zn(2+).

This sequence belongs to the QueC family. Requires Zn(2+) as cofactor.

The catalysed reaction is 7-carboxy-7-deazaguanine + NH4(+) + ATP = 7-cyano-7-deazaguanine + ADP + phosphate + H2O + H(+). The protein operates within purine metabolism; 7-cyano-7-deazaguanine biosynthesis. Its function is as follows. Catalyzes the ATP-dependent conversion of 7-carboxy-7-deazaguanine (CDG) to 7-cyano-7-deazaguanine (preQ(0)). The polypeptide is 7-cyano-7-deazaguanine synthase (Sinorhizobium fredii (strain NBRC 101917 / NGR234)).